A 376-amino-acid polypeptide reads, in one-letter code: 26S proteasome non-ATPase regulatory subunit 13 (376 aa).

The PCI domain occupies 171-338 (SYYKDALRFL…KRVHMTWVQP (168 aa)). Lys298 carries the N6-acetyllysine modification.

The protein belongs to the proteasome subunit S11 family. As to quaternary structure, component of the 19S proteasome regulatory particle complex. The 26S proteasome consists of a 20S core particle (CP) and two 19S regulatory subunits (RP). The regulatory particle is made of a lid composed of 9 subunits including PSMD13, a base containing 6 ATPases and few additional components.

Component of the 26S proteasome, a multiprotein complex involved in the ATP-dependent degradation of ubiquitinated proteins. This complex plays a key role in the maintenance of protein homeostasis by removing misfolded or damaged proteins, which could impair cellular functions, and by removing proteins whose functions are no longer required. Therefore, the proteasome participates in numerous cellular processes, including cell cycle progression, apoptosis, or DNA damage repair. This is 26S proteasome non-ATPase regulatory subunit 13 (Psmd13) from Mus musculus (Mouse).